We begin with the raw amino-acid sequence, 546 residues long: NADH-ubiquinone oxidoreductase chain 5 (546 aa).

16 helical membrane passes run 1–21 (MFLLSVFFPLLGGLVNTSPIA), 31–51 (IIAIGCMVVAFISSVVIYYEV), 52–72 (VFMGCAVSVDVFGTWFSVGTF), 82–102 (LLTANMLFTVTGVSMAVHMYA), 112–132 (LNLFLGYLSYFTGFMCVLVAA), 135–155 (LLVMLVGWEGIGVCSYLLIGY), 175–195 (VSDGLLMWGVLWVWYHLGSLE), 198–218 (LLNVYSASGFVGLSILIGAMG), 237–257 (TPVSALIHAATLVTAGVYLLV), 264–284 (EMFVIIVGSLTAFMAGVFGAT), 291–310 (VIAYSTCSQLGYMMVSLGLG), 321–341 (LMTHASFKAALFLAAGMVISG), 358–378 (AMFTMLTLMVASLSLIGWPEL), 387–407 (ILNLAAICADPIADVAHTLLL), 440–460 (VLPILAMAILLLDIMLKVWVG), and 468–488 (LFFLPWGVKTLPFGLMVAGIL).

The protein belongs to the complex I subunit 5 family.

The protein localises to the mitochondrion inner membrane. The catalysed reaction is a ubiquinone + NADH + 5 H(+)(in) = a ubiquinol + NAD(+) + 4 H(+)(out). In terms of biological role, core subunit of the mitochondrial membrane respiratory chain NADH dehydrogenase (Complex I) that is believed to belong to the minimal assembly required for catalysis. Complex I functions in the transfer of electrons from NADH to the respiratory chain. The immediate electron acceptor for the enzyme is believed to be ubiquinone. The protein is NADH-ubiquinone oxidoreductase chain 5 (ND5) of Chlamydomonas reinhardtii (Chlamydomonas smithii).